We begin with the raw amino-acid sequence, 818 residues long: MVSSVVEKTSVAHKETALILWFEEVGTHDVGLVGGKNSSLGEMIQQLTNKGVNVPSGFATTAYAYRYFIQEAGLEQKLRDLFTDLDVNDMANLQERGHLARQLILDTPFPQNLQTAIAEAYGAMCERYGQKMGRTGVDVAVRSSATAEDLPEASFAGQQETYLNVHSLSCVLESCHKCFASLFTDRAISYRHHNGFDHFAVALSVGVQKMVRSDLATSGVMFSIDTETGFKNAALITAAYGLGENVVQGAVNPDEYFVFKPTLKEGFKPILEKRLGSKAIKMVYDVGGSKLTKNVEVAEPEREKYCINDEEILQLARWACIIEDHYSGVRGVYTPMDIEWAKDGQTGELFIVQARPETVQSQKSANVIKTYELKDHSQVLATGRSVGAAIGQGKAQVIRNVSQINQFRPGEVLITNRTDPDWEPIMKQASAIVTNQGGKTCHAAIIAREMGIPAIVGCGDATDTIKTGEDVTICCSEGDEGSVYSGILNYEVHETELSNLPRTKTQILMNVGNPEQAFGFASYPADGVGLARLEFIIANHIKAHPLALMKFDELEDPLAKAEIAELTKLYAGDRPRFFVDKLAHGIAMIAAAFYPKPVVVRMSDFKSNEYANLLGGRQFEPKEENPMIGWRGASRYYDPNYREAYALECQALKRVRDEMGLTNVIPMIPFCRTPDEGRKVIAEMAKHGLKQGKNGLEIYVMCELPSNVILADEFSEVFDGFSIGSNDLTQLTLGLDRDSSLVAHLFDERNLGVKRMVKMAIETAKANGRKIGICGQAPSDYPEFAEFLVELGIDSISLNPDSVLKTVLRIAEVEKALG.

Histidine 442 functions as the Tele-phosphohistidine intermediate in the catalytic mechanism. Substrate contacts are provided by arginine 532, arginine 601, glutamate 703, glycine 724, serine 725, asparagine 726, and aspartate 727. Position 703 (glutamate 703) interacts with Mg(2+). Aspartate 727 is a Mg(2+) binding site. Cysteine 774 functions as the Proton donor in the catalytic mechanism.

This sequence belongs to the PEP-utilizing enzyme family. Requires Mg(2+) as cofactor.

The enzyme catalyses pyruvate + ATP + H2O = phosphoenolpyruvate + AMP + phosphate + 2 H(+). It participates in carbohydrate biosynthesis; gluconeogenesis. Its function is as follows. Catalyzes the phosphorylation of pyruvate to phosphoenolpyruvate. The sequence is that of Phosphoenolpyruvate synthase (ppsA) from Synechocystis sp. (strain ATCC 27184 / PCC 6803 / Kazusa).